A 207-amino-acid chain; its full sequence is Ribonuclease HII (207 aa).

The RNase H type-2 domain maps to 1–207 (MDVLGIDEAG…ATVEKMKNSQ (207 aa)). A divalent metal cation is bound by residues aspartate 7, glutamate 8, and aspartate 105.

Belongs to the RNase HII family. Mn(2+) is required as a cofactor. Requires Mg(2+) as cofactor.

The protein resides in the cytoplasm. The enzyme catalyses Endonucleolytic cleavage to 5'-phosphomonoester.. In terms of biological role, endonuclease that specifically degrades the RNA of RNA-DNA hybrids. The chain is Ribonuclease HII from Methanobrevibacter smithii (strain ATCC 35061 / DSM 861 / OCM 144 / PS).